A 398-amino-acid polypeptide reads, in one-letter code: 4-hydroxy-3-methylbut-2-enyl diphosphate reductase (398 aa).

Cys66 contacts [4Fe-4S] cluster. A (2E)-4-hydroxy-3-methylbut-2-enyl diphosphate-binding site is contributed by His96. His96 is a dimethylallyl diphosphate binding site. His96 is a binding site for isopentenyl diphosphate. Cys157 provides a ligand contact to [4Fe-4S] cluster. (2E)-4-hydroxy-3-methylbut-2-enyl diphosphate is bound at residue His185. His185 contributes to the dimethylallyl diphosphate binding site. Isopentenyl diphosphate is bound at residue His185. Catalysis depends on Glu187, which acts as the Proton donor. Thr250 contributes to the (2E)-4-hydroxy-3-methylbut-2-enyl diphosphate binding site. Position 288 (Cys288) interacts with [4Fe-4S] cluster. Positions 317, 318, 319, and 380 each coordinate (2E)-4-hydroxy-3-methylbut-2-enyl diphosphate. 4 residues coordinate dimethylallyl diphosphate: Ser317, Ser318, Asn319, and Ser380. 4 residues coordinate isopentenyl diphosphate: Ser317, Ser318, Asn319, and Ser380.

It belongs to the IspH family. Requires [4Fe-4S] cluster as cofactor.

The enzyme catalyses isopentenyl diphosphate + 2 oxidized [2Fe-2S]-[ferredoxin] + H2O = (2E)-4-hydroxy-3-methylbut-2-enyl diphosphate + 2 reduced [2Fe-2S]-[ferredoxin] + 2 H(+). The catalysed reaction is dimethylallyl diphosphate + 2 oxidized [2Fe-2S]-[ferredoxin] + H2O = (2E)-4-hydroxy-3-methylbut-2-enyl diphosphate + 2 reduced [2Fe-2S]-[ferredoxin] + 2 H(+). Its pathway is isoprenoid biosynthesis; dimethylallyl diphosphate biosynthesis; dimethylallyl diphosphate from (2E)-4-hydroxy-3-methylbutenyl diphosphate: step 1/1. The protein operates within isoprenoid biosynthesis; isopentenyl diphosphate biosynthesis via DXP pathway; isopentenyl diphosphate from 1-deoxy-D-xylulose 5-phosphate: step 6/6. Catalyzes the conversion of 1-hydroxy-2-methyl-2-(E)-butenyl 4-diphosphate (HMBPP) into a mixture of isopentenyl diphosphate (IPP) and dimethylallyl diphosphate (DMAPP). Acts in the terminal step of the DOXP/MEP pathway for isoprenoid precursor biosynthesis. The polypeptide is 4-hydroxy-3-methylbut-2-enyl diphosphate reductase (Prochlorococcus marinus (strain MIT 9515)).